A 408-amino-acid chain; its full sequence is Neutral cholesterol ester hydrolase 1 (408 aa).

Topologically, residues 1–4 (MRSS) are cytoplasmic. Residues 5 to 25 (CVLLTALVALAAYYVYIPLPG) traverse the membrane as a helical; Signal-anchor for type II membrane protein segment. Residues 26–408 (SVSDPWKLML…SYIKWLDQNL (383 aa)) lie on the Lumenal side of the membrane. An Involved in the stabilization of the negatively charged intermediate by the formation of the oxyanion hole motif is present at residues 113–115 (HGG). Residue S191 is part of the active site. N-linked (GlcNAc...) asparagine glycosylation is found at N270 and N287. Residues D348 and H378 contribute to the active site. N-linked (GlcNAc...) asparagine glycosylation occurs at N389.

This sequence belongs to the 'GDXG' lipolytic enzyme family. In terms of processing, N-glycosylated.

Its subcellular location is the cell membrane. The protein localises to the microsome. The catalysed reaction is a 1-O-alkyl-2-acetyl-sn-glycerol + H2O = a 1-O-alkyl-sn-glycerol + acetate + H(+). The enzyme catalyses 1-O-hexadecyl-2-acetyl-sn-glycerol + H2O = 1-O-hexadecyl-sn-glycerol + acetate + H(+). It carries out the reaction a cholesterol ester + H2O = cholesterol + a fatty acid + H(+). It catalyses the reaction cholesteryl (9Z-octadecenoate) + H2O = cholesterol + (9Z)-octadecenoate + H(+). Functionally, hydrolyzes 2-acetyl monoalkylglycerol ether (1-O-alkyl-2-acetyl-sn-glycerol), the penultimate precursor of the pathway for de novo synthesis of platelet-activating factor. May be responsible for the hydrolysis of cholesterol esters (such as cholesteryl (9Z-octadecenoate)) in macrophages. Also involved in organ detoxification by hydrolyzing exogenous organophosphorus compounds. The sequence is that of Neutral cholesterol ester hydrolase 1 (NCEH1) from Pongo abelii (Sumatran orangutan).